Consider the following 80-residue polypeptide: Probable small nuclear ribonucleoprotein G (80 aa).

Positions 5 to 76 (GQPPDLKKYM…IVTVEALEPV (72 aa)) constitute a Sm domain.

Belongs to the snRNP Sm proteins family.

It localises to the nucleus. In terms of biological role, probable common Sm protein, is found in U1 and U2 snRNPs and may be part of the spliceosome. This Arabidopsis thaliana (Mouse-ear cress) protein is Probable small nuclear ribonucleoprotein G.